The following is a 364-amino-acid chain: FNIP repeat-containing protein DDB_G0277323 (364 aa).

5 FNIP repeats span residues 57–98 (MNIE…DLKY), 155–198 (YDCL…FGWT), 214–244 (LRVL…FGSS), 245–271 (FNQV…NQPI), and 295–340 (FNQP…FINN).

The sequence is that of FNIP repeat-containing protein DDB_G0277323 from Dictyostelium discoideum (Social amoeba).